The following is a 296-amino-acid chain: Probable GTP 3',8-cyclase (296 aa).

Residues 5–230 (EYGRVVTNLR…HRRTQYFTPK (226 aa)) enclose the Radical SAM core domain. Arginine 14 lines the GTP pocket. The [4Fe-4S] cluster site is built by cysteine 21 and cysteine 25. Tyrosine 27 provides a ligand contact to S-adenosyl-L-methionine. Cysteine 28 provides a ligand contact to [4Fe-4S] cluster. Lysine 61 contributes to the GTP binding site. An S-adenosyl-L-methionine-binding site is contributed by glycine 65. Position 89 (threonine 89) interacts with GTP. S-adenosyl-L-methionine is bound at residue serine 113. A GTP-binding site is contributed by lysine 150. Residues cysteine 245 and cysteine 248 each coordinate [4Fe-4S] cluster. Residue 250–252 (RMR) coordinates GTP. A [4Fe-4S] cluster-binding site is contributed by cysteine 262.

This sequence belongs to the radical SAM superfamily. MoaA family. [4Fe-4S] cluster is required as a cofactor.

It catalyses the reaction GTP + AH2 + S-adenosyl-L-methionine = (8S)-3',8-cyclo-7,8-dihydroguanosine 5'-triphosphate + 5'-deoxyadenosine + L-methionine + A + H(+). It participates in cofactor biosynthesis; molybdopterin biosynthesis. Catalyzes the cyclization of GTP to (8S)-3',8-cyclo-7,8-dihydroguanosine 5'-triphosphate. This chain is Probable GTP 3',8-cyclase, found in Archaeoglobus fulgidus (strain ATCC 49558 / DSM 4304 / JCM 9628 / NBRC 100126 / VC-16).